A 430-amino-acid chain; its full sequence is Adenylosuccinate synthetase (430 aa).

GTP contacts are provided by residues 12 to 18 and 40 to 42; these read GDEGKGK and GHT. Asp13 serves as the catalytic Proton acceptor. Asp13 and Gly40 together coordinate Mg(2+). IMP is bound by residues 13–16, 38–41, Thr130, Arg144, Gln224, Thr239, and Arg303; these read DEGK and NAGH. Catalysis depends on His41, which acts as the Proton donor. Residue 299–305 coordinates substrate; the sequence is VNTGRKR. Residues Arg305, 331–333, and 413–415 contribute to the GTP site; these read KLD and STS.

This sequence belongs to the adenylosuccinate synthetase family. As to quaternary structure, homodimer. Mg(2+) serves as cofactor.

It localises to the cytoplasm. The catalysed reaction is IMP + L-aspartate + GTP = N(6)-(1,2-dicarboxyethyl)-AMP + GDP + phosphate + 2 H(+). It functions in the pathway purine metabolism; AMP biosynthesis via de novo pathway; AMP from IMP: step 1/2. Functionally, plays an important role in the de novo pathway of purine nucleotide biosynthesis. Catalyzes the first committed step in the biosynthesis of AMP from IMP. The protein is Adenylosuccinate synthetase of Rhodopseudomonas palustris (strain ATCC BAA-98 / CGA009).